Here is a 200-residue protein sequence, read N- to C-terminus: Nucleoplasmin (200 aa).

N-acetylalanine is present on Ala-2. Ser-3 carries the phosphoserine modification. A Phosphothreonine modification is found at Thr-4. Position 6 is a phosphoserine (Ser-6). The residue at position 8 (Thr-8) is a Phosphothreonine. Residues Glu-35–Glu-39 are acidic tract A1. Positions Asp-123 to Glu-148 are enriched in acidic residues. The segment at Asp-123 to Lys-200 is disordered. Positions Glu-128 to Glu-148 are acidic tract A2. A Phosphoserine modification is found at Ser-149. Over residues Ala-153–Lys-170 the composition is skewed to basic residues. Positions Lys-155–Lys-170 match the Bipartite nuclear localization signal motif. The tract at residues Glu-174–Glu-176 is acidic tract A3. Phosphoserine is present on residues Ser-177, Ser-178, and Ser-182. Basic residues predominate over residues Lys-185 to Lys-200. Position 192 is an omega-N-methylarginine; by PRMT5; alternate (Arg-192). Arg-192 bears the Symmetric dimethylarginine; by PRMT5; alternate mark.

It belongs to the nucleoplasmin family. As to quaternary structure, homopentamer, when bound to H2A-H2B dimers only. Homodecamer of two stacked pentamers, when bound to H2A-H2B dimers and H3-H4 tetramers simultaneously. Interacts with the heterotetramer formed by wdr77 and prmt5. Post-translationally, activated by phosphorylation of multiple serine/threonine residues, along both core and tail domains. The level of phosphorylation gradually increases during egg maturation, reaching an average of 7-10 phosphates per monomer, so that at the time of fertilization the activity of the protein is maximum. Methylated by prmt5, yielding both monomethylated and symmetrically dimethylated Arg-192.

It is found in the nucleus. Its function is as follows. Acts as a chaperone for histones, such as histone H2A-H2B, and thus regulates the assembly of nucleosome cores. Involved in chromatin remodeling, especially during fertilization and early embryonic development. May be involved in sperm chromatin decondensation during fertilization. This Xenopus laevis (African clawed frog) protein is Nucleoplasmin.